Consider the following 414-residue polypeptide: Tyrosine--tRNA ligase (414 aa).

Tyrosine 38 contacts L-tyrosine. The 'HIGH' region motif lies at 43-52 (PTATSLHLGN). The L-tyrosine site is built by tyrosine 165 and glutamine 169. The 'KMSKS' region motif lies at 228–232 (KFGKS). An ATP-binding site is contributed by lysine 231. The region spanning 349 to 414 (FNANQIIDLG…KKYFFIIELI (66 aa)) is the S4 RNA-binding domain.

It belongs to the class-I aminoacyl-tRNA synthetase family. TyrS type 1 subfamily. In terms of assembly, homodimer.

Its subcellular location is the cytoplasm. The catalysed reaction is tRNA(Tyr) + L-tyrosine + ATP = L-tyrosyl-tRNA(Tyr) + AMP + diphosphate + H(+). Its function is as follows. Catalyzes the attachment of tyrosine to tRNA(Tyr) in a two-step reaction: tyrosine is first activated by ATP to form Tyr-AMP and then transferred to the acceptor end of tRNA(Tyr). This is Tyrosine--tRNA ligase from Mesomycoplasma hyopneumoniae (strain 232) (Mycoplasma hyopneumoniae).